We begin with the raw amino-acid sequence, 351 residues long: Flagellin (351 aa).

Belongs to the bacterial flagellin family.

It localises to the secreted. Its subcellular location is the bacterial flagellum. Its function is as follows. Flagellin is the subunit protein which polymerizes to form the filaments of bacterial flagella. In Serratia marcescens, this protein is Flagellin (fliC).